We begin with the raw amino-acid sequence, 369 residues long: Anhydro-N-acetylmuramic acid kinase (369 aa).

ATP is bound at residue 12–19 (GTSLDGVD).

The protein belongs to the anhydro-N-acetylmuramic acid kinase family.

The enzyme catalyses 1,6-anhydro-N-acetyl-beta-muramate + ATP + H2O = N-acetyl-D-muramate 6-phosphate + ADP + H(+). Its pathway is amino-sugar metabolism; 1,6-anhydro-N-acetylmuramate degradation. It functions in the pathway cell wall biogenesis; peptidoglycan recycling. Functionally, catalyzes the specific phosphorylation of 1,6-anhydro-N-acetylmuramic acid (anhMurNAc) with the simultaneous cleavage of the 1,6-anhydro ring, generating MurNAc-6-P. Is required for the utilization of anhMurNAc either imported from the medium or derived from its own cell wall murein, and thus plays a role in cell wall recycling. This Escherichia coli O81 (strain ED1a) protein is Anhydro-N-acetylmuramic acid kinase.